Consider the following 338-residue polypeptide: DNA-directed RNA polymerase subunit alpha (338 aa).

The alpha N-terminal domain (alpha-NTD) stretch occupies residues 1–226 (MLIAQRPTLT…ELFGLARELN (226 aa)). The interval 243 to 338 (LAADLALPIE…DADYADEQYN (96 aa)) is alpha C-terminal domain (alpha-CTD).

This sequence belongs to the RNA polymerase alpha chain family. Homodimer. The RNAP catalytic core consists of 2 alpha, 1 beta, 1 beta' and 1 omega subunit. When a sigma factor is associated with the core the holoenzyme is formed, which can initiate transcription.

The enzyme catalyses RNA(n) + a ribonucleoside 5'-triphosphate = RNA(n+1) + diphosphate. In terms of biological role, DNA-dependent RNA polymerase catalyzes the transcription of DNA into RNA using the four ribonucleoside triphosphates as substrates. In Beutenbergia cavernae (strain ATCC BAA-8 / DSM 12333 / CCUG 43141 / JCM 11478 / NBRC 16432 / NCIMB 13614 / HKI 0122), this protein is DNA-directed RNA polymerase subunit alpha.